A 270-amino-acid polypeptide reads, in one-letter code: UPF0354 protein Bcer98_3354 (270 aa).

Belongs to the UPF0354 family.

The polypeptide is UPF0354 protein Bcer98_3354 (Bacillus cytotoxicus (strain DSM 22905 / CIP 110041 / 391-98 / NVH 391-98)).